The chain runs to 121 residues: Small ribosomal subunit protein bS21m (121 aa).

The transit peptide at 1 to 14 directs the protein to the mitochondrion; the sequence is MNSSYFPGVLGVRW.

The protein belongs to the bacterial ribosomal protein bS21 family. In terms of assembly, component of the mitochondrial small ribosomal subunit (mt-SSU). Mature yeast 74S mitochondrial ribosomes consist of a small (37S) and a large (54S) subunit. The 37S small subunit contains a 15S ribosomal RNA (15S mt-rRNA) and at least 32 different proteins. The 54S large subunit contains a 21S rRNA (21S mt-rRNA) and at least 45 different proteins.

It is found in the mitochondrion. Its function is as follows. Component of the mitochondrial ribosome (mitoribosome), a dedicated translation machinery responsible for the synthesis of mitochondrial genome-encoded proteins, including at least some of the essential transmembrane subunits of the mitochondrial respiratory chain. The mitoribosomes are attached to the mitochondrial inner membrane and translation products are cotranslationally integrated into the membrane. This Schizosaccharomyces pombe (strain 972 / ATCC 24843) (Fission yeast) protein is Small ribosomal subunit protein bS21m (mrp21).